The following is a 93-amino-acid chain: Acylphosphatase (93 aa).

Positions 6-93 constitute an Acylphosphatase-like domain; sequence RAHILVSGEV…GDLGPFSVRH (88 aa). Catalysis depends on residues Arg-21 and Asn-39.

It belongs to the acylphosphatase family.

The enzyme catalyses an acyl phosphate + H2O = a carboxylate + phosphate + H(+). This Anaeromyxobacter sp. (strain Fw109-5) protein is Acylphosphatase (acyP).